Consider the following 173-residue polypeptide: MDADVNLKTLPYRKCVGIVVFNHEGKVWVGRRLMTLAHADIDRSHRWQLPQGGIDEDEKPLDAAYRELYEETGIRSVKLIKEAQNWFYYDFPQELVACTLSNKYCGQMQKWFAFQFTGELSEIVINPPPDGNKAEFDQWKWIDLESLPSIAVSFKKHVYMKVVSEFRGSLRSL.

In terms of domain architecture, Nudix hydrolase spans 11–164; that stretch reads PYRKCVGIVV…KKHVYMKVVS (154 aa). A Nudix box motif is present at residues 52 to 73; the sequence is GGIDEDEKPLDAAYRELYEETG.

Belongs to the Nudix hydrolase family. RppH subfamily. The cofactor is a divalent metal cation.

Its function is as follows. Accelerates the degradation of transcripts by removing pyrophosphate from the 5'-end of triphosphorylated RNA, leading to a more labile monophosphorylated state that can stimulate subsequent ribonuclease cleavage. The polypeptide is RNA pyrophosphohydrolase (Bartonella tribocorum (strain CIP 105476 / IBS 506)).